Here is a 154-residue protein sequence, read N- to C-terminus: 6,7-dimethyl-8-ribityllumazine synthase (154 aa).

5-amino-6-(D-ribitylamino)uracil contacts are provided by residues Phe-22, 56 to 58, and 80 to 82; these read AFE and AVI. (2S)-2-hydroxy-3-oxobutyl phosphate is bound at residue 85–86; sequence AT. His-88 functions as the Proton donor in the catalytic mechanism. A 5-amino-6-(D-ribitylamino)uracil-binding site is contributed by Phe-113. Arg-127 is a (2S)-2-hydroxy-3-oxobutyl phosphate binding site.

The protein belongs to the DMRL synthase family. Forms an icosahedral capsid composed of 60 subunits, arranged as a dodecamer of pentamers.

The catalysed reaction is (2S)-2-hydroxy-3-oxobutyl phosphate + 5-amino-6-(D-ribitylamino)uracil = 6,7-dimethyl-8-(1-D-ribityl)lumazine + phosphate + 2 H2O + H(+). Its pathway is cofactor biosynthesis; riboflavin biosynthesis; riboflavin from 2-hydroxy-3-oxobutyl phosphate and 5-amino-6-(D-ribitylamino)uracil: step 1/2. Catalyzes the formation of 6,7-dimethyl-8-ribityllumazine by condensation of 5-amino-6-(D-ribitylamino)uracil with 3,4-dihydroxy-2-butanone 4-phosphate. This is the penultimate step in the biosynthesis of riboflavin. The protein is 6,7-dimethyl-8-ribityllumazine synthase of Geobacillus kaustophilus (strain HTA426).